A 206-amino-acid chain; its full sequence is Inner membrane protein YnjF (206 aa).

Topologically, residues 1–37 are periplasmic; sequence MLDRHLHPRIKPLLHQCVRVLDKPGITPDGLTLVGFA. Residues 38 to 60 form a helical membrane-spanning segment; it reads IGVLALPFLALGWYLAALVVILL. The Cytoplasmic portion of the chain corresponds to 61–79; the sequence is NRLLDGLDGALARRRELTD. The chain crosses the membrane as a helical span at residues 80-102; that stretch reads AGGFLDISLDFLFYALVPFGFIL. The Periplasmic portion of the chain corresponds to 103-111; sequence AAPEQNALA. The chain crosses the membrane as a helical span at residues 112-134; it reads GGWLLFAFIGTGSSFLAFAALAA. The Cytoplasmic segment spans residues 135–146; the sequence is KHQIDNPGYAHK. Residues 147–169 traverse the membrane as a helical segment; that stretch reads SFYYLGGLTEGTETILLFVLGCL. Topologically, residues 170–173 are periplasmic; it reads FPAW. Residues 174-196 traverse the membrane as a helical segment; sequence FAWFAWIFGALCWMTTFTRVWSG. The Cytoplasmic segment spans residues 197–206; it reads YLTLKSLQRQ.

Belongs to the CDP-alcohol phosphatidyltransferase class-I family.

The protein resides in the cell inner membrane. The chain is Inner membrane protein YnjF (ynjF) from Escherichia coli (strain K12).